A 325-amino-acid polypeptide reads, in one-letter code: Probable transcription factor At4g01260 (325 aa).

The interval Met1 to Lys98 is disordered. 2 stretches are compositionally biased toward low complexity: residues Ala23–Gly32 and Lys49–Thr69. Residues Arg73 to Lys83 are compositionally biased toward basic and acidic residues.

Belongs to the GeBP family.

The polypeptide is Probable transcription factor At4g01260 (Arabidopsis thaliana (Mouse-ear cress)).